The primary structure comprises 516 residues: Exodeoxyribonuclease 7 large subunit (516 aa).

It belongs to the XseA family. As to quaternary structure, heterooligomer composed of large and small subunits.

Its subcellular location is the cytoplasm. The enzyme catalyses Exonucleolytic cleavage in either 5'- to 3'- or 3'- to 5'-direction to yield nucleoside 5'-phosphates.. Bidirectionally degrades single-stranded DNA into large acid-insoluble oligonucleotides, which are then degraded further into small acid-soluble oligonucleotides. In Chlamydia trachomatis serovar A (strain ATCC VR-571B / DSM 19440 / HAR-13), this protein is Exodeoxyribonuclease 7 large subunit.